Consider the following 290-residue polypeptide: Acetylglutamate kinase (290 aa).

Substrate is bound by residues 60–61, R82, and N187; that span reads GG.

This sequence belongs to the acetylglutamate kinase family. ArgB subfamily.

The protein localises to the cytoplasm. The catalysed reaction is N-acetyl-L-glutamate + ATP = N-acetyl-L-glutamyl 5-phosphate + ADP. It functions in the pathway amino-acid biosynthesis; L-arginine biosynthesis; N(2)-acetyl-L-ornithine from L-glutamate: step 2/4. Functionally, catalyzes the ATP-dependent phosphorylation of N-acetyl-L-glutamate. This Marinobacter nauticus (strain ATCC 700491 / DSM 11845 / VT8) (Marinobacter aquaeolei) protein is Acetylglutamate kinase.